The following is a 372-amino-acid chain: Germination protease (372 aa).

Positions M1–D15 are excised as a propeptide.

Belongs to the peptidase A25 family. As to quaternary structure, homotetramer. Autoproteolytically processed. The inactive tetrameric zymogen termed p46 autoprocesses to a smaller form termed p41, which is active only during spore germination.

The enzyme catalyses Endopeptidase action with P4 Glu or Asp, P1 preferably Glu &gt; Asp, P1' hydrophobic and P2' Ala.. Its function is as follows. Initiates the rapid degradation of small, acid-soluble proteins during spore germination. The polypeptide is Germination protease (Geobacillus sp. (strain WCH70)).